The sequence spans 764 residues: Bifunctional type I diterpene synthase tndC (764 aa).

The terpene cyclase stretch occupies residues 1-324 (MEYRYSTVVD…CPRYHPWSSY (324 aa)). 2 residues coordinate Mg(2+): D92 and D96. Positions 92–96 (DDVTD) match the DDXXD 1 motif. Residues 224 to 232 (NDLYSWQKE) carry the NSE/DTE motif. The prenyltransferase stretch occupies residues 325–761 (NERQLDWMKN…FQLRLILEML (437 aa)). The tract at residues 377-403 (AVNGNGASHTSSIKGSTGGNGVTHSPV) is disordered. Polar residues predominate over residues 381-391 (NGASHTSSIKG). Residues K484, R487, and H516 each coordinate isopentenyl diphosphate. 2 residues coordinate Mg(2+): D523 and D527. Positions 523–527 (DDLED) match the DDXXD 2 motif. Dimethylallyl diphosphate is bound at residue R532. R533 provides a ligand contact to isopentenyl diphosphate. Dimethylallyl diphosphate is bound by residues K610, T611, Q646, N653, K663, and K673.

It in the N-terminal section; belongs to the terpene synthase family. This sequence in the C-terminal section; belongs to the FPP/GGPP synthase family.

It carries out the reaction isopentenyl diphosphate + (2E,6E)-farnesyl diphosphate = (2E,6E,10E)-geranylgeranyl diphosphate + diphosphate. The enzyme catalyses (2E,6E,10E)-geranylgeranyl diphosphate = talarodiene + diphosphate. It functions in the pathway secondary metabolite biosynthesis; terpenoid biosynthesis. Functionally, bifunctional type I diterpene synthase; part of the gene cluster that mediates the biosynthesis of talaronoid C, a fusicoccane diterpenoid with an unprecedented tricyclic 5/8/6 ring system. The first step in the pathway is performed by the fusicoccadiene synthase tndC that possesses both prenyl transferase and terpene cyclase activity, converting isopentenyl diphosphate and dimethylallyl diphosphate into geranylgeranyl diphosphate (GGDP) and further converting GGDP into talarodiene, a precursor for talaronoid C. The remaining enzymes from the cluster include the cytochrome P450 monooxygenase tndB, the aldehyde reductase tndE and the alcohol dehydrogenase tndF that are involved in the conversion of talarodiene into talaronoid C. This is Bifunctional type I diterpene synthase tndC from Aspergillus flavipes.